Here is a 713-residue protein sequence, read N- to C-terminus: Forkhead box protein P2 (713 aa).

The segment covering 1 to 28 has biased composition (polar residues); it reads MMQESATETISNSSMNQNGMSTLSSQLD. 2 disordered regions span residues 1-44 and 283-337; these read MMQE…SSEV and KHGG…TGAS. The segment covering 290 to 303 has biased composition (low complexity); the sequence is TTNNSSSTTSSTTS. Positions 313 to 322 are enriched in polar residues; sequence SIVNGQSSVL. Residues 324–335 show a composition bias toward basic and acidic residues; the sequence is ARRDSSSHEETG. The C2H2-type zinc-finger motif lies at 344-369; sequence GVCKWPGCESICEDFGQFLKHLNNEH. Positions 386–407 are leucine-zipper; the sequence is VQQLEIQLSKERERLQAMMTHL. A CTBP1-binding region spans residues 420–424; the sequence is PLNLV. Residues 436–457 show a composition bias toward low complexity; that stretch reads TSPQSLPQTPTTPTAPVTPITQ. Positions 436-463 are disordered; the sequence is TSPQSLPQTPTTPTAPVTPITQGPSVIT. The fork-head DNA-binding region spans 502–592; the sequence is RPPFTYATLI…SQKITGSPTL (91 aa). Disordered regions lie at residues 647–666 and 676–713; these read LDHI…QPHI and VIAE…EDLE. Over residues 697-713 the composition is skewed to acidic residues; the sequence is LEDDREIEEEPLSEDLE.

In terms of assembly, forms homodimers and heterodimers with FOXP1 and FOXP4. Dimerization is required for DNA-binding. Interacts with CTBP1. Interacts with FOXP1. Interacts with TBR1. Interacts with ZMYM2.

The protein localises to the nucleus. Its function is as follows. Transcriptional repressor that may play a role in the specification and differentiation of lung epithelium. May also play a role in developing neural, gastrointestinal and cardiovascular tissues. Can act with CTBP1 to synergistically repress transcription but CTPBP1 is not essential. Plays a role in synapse formation by regulating SRPX2 levels. In Gorilla gorilla gorilla (Western lowland gorilla), this protein is Forkhead box protein P2 (FOXP2).